A 440-amino-acid polypeptide reads, in one-letter code: General transcription factor IIE subunit 1 (440 aa).

Alanine 2 carries the N-acetylalanine modification. In terms of domain architecture, HTH TFE/IIEalpha-type spans 14–104; sequence LKRLAKYVIR…NYRTLVNVVK (91 aa). An N6-acetyllysine modification is found at lysine 67. Zn(2+) is bound by residues cysteine 129, cysteine 132, cysteine 154, and cysteine 157. The C4-type zinc finger occupies 129 to 157; sequence CPVCCSTFTDLEANQLFDPMTGTFRCTFC. Serine 268 is subject to Phosphoserine. Low complexity predominate over residues 333-353; sequence SSVTAGSVGAAAPVTAANGSD. The tract at residues 333 to 395 is disordered; that stretch reads SSVTAGSVGA…EEFEEVADDP (63 aa). Composition is skewed to acidic residues over residues 354–364 and 381–393; these read SESETSESDDD and EDEE…EVAD.

This sequence belongs to the TFIIE alpha subunit family. In terms of assembly, tetramer of two alpha and two beta chains. Interacts with TAF6/TAFII80. Interacts with ATF7IP. Interacts with SND1. Part of TBP-based Pol II pre-initiation complex (PIC), in which Pol II core assembles with general transcription factors and other specific initiation factors including GTF2E1, GTF2E2, GTF2F1, GTF2F2, TCEA1, ERCC2, ERCC3, GTF2H2, GTF2H3, GTF2H4, GTF2H5, GTF2A1, GTF2A2, GTF2B and TBP; this large multi-subunit PIC complex mediates DNA unwinding and targets Pol II core to the transcription start site where the first phosphodiester bond forms.

It is found in the nucleus. Recruits TFIIH to the initiation complex and stimulates the RNA polymerase II C-terminal domain kinase and DNA-dependent ATPase activities of TFIIH. Both TFIIH and TFIIE are required for promoter clearance by RNA polymerase. The polypeptide is General transcription factor IIE subunit 1 (Gtf2e1) (Mus musculus (Mouse)).